A 359-amino-acid polypeptide reads, in one-letter code: 3-dehydroquinate synthase (359 aa).

It belongs to the archaeal-type DHQ synthase family.

It carries out the reaction 2-amino-2,3,7-trideoxy-D-lyxo-hept-6-ulosonate + NAD(+) + H2O = 3-dehydroquinate + NH4(+) + NADH + H(+). Its function is as follows. Catalyzes the oxidative deamination and cyclization of 2-amino-3,7-dideoxy-D-threo-hept-6-ulosonic acid (ADH) to yield 3-dehydroquinate (DHQ), which is fed into the canonical shikimic pathway of aromatic amino acid biosynthesis. This chain is 3-dehydroquinate synthase, found in Methanosphaera stadtmanae (strain ATCC 43021 / DSM 3091 / JCM 11832 / MCB-3).